We begin with the raw amino-acid sequence, 1461 residues long: Pleiotropic drug resistance protein 2 (1461 aa).

An ABC transporter 1 domain is found at 172 to 445; it reads LGLIHLSPSK…FEYMGFRCPE (274 aa). ATP is bound at residue 205 to 212; the sequence is GPPGSGKT. An ABC transmembrane type-2 1 domain is found at 523 to 736; the sequence is ELFKSCFTRE…GQNAIAINEF (214 aa). The next 6 helical transmembrane spans lie at 541 to 561, 577 to 597, 622 to 642, 660 to 680, 685 to 705, and 771 to 791; these read FLYI…LTVF, FWGA…QELA, LPIW…WIIL, LLAF…IAAA, VVAN…GGFI, and ISIG…IAAL. The 253-residue stretch at 859 to 1111 folds into the ABC transporter 2 domain; it reads LAFNHVNYYV…KLVEYFETIP (253 aa). Position 904–911 (904–911) interacts with ATP; it reads GVSGAGKT. The 215-residue stretch at 1184–1398 folds into the ABC transmembrane type-2 2 domain; that stretch reads TQCKACFWKQ…TIYGIFASQV (215 aa). The next 7 membrane-spanning stretches (helical) occupy residues 1203–1223, 1243–1263, 1291–1311, 1321–1341, 1348–1368, 1379–1399, and 1430–1450; these read YNAI…VIFW, YAAV…VVAI, TIYV…MIGY, FYYF…MVVA, IAAI…GFLI, WYYW…SQVG, and FLLV…FVFA.

Belongs to the ABC transporter superfamily. ABCG family. PDR (TC 3.A.1.205) subfamily.

Its subcellular location is the membrane. Functionally, may be a general defense protein. The sequence is that of Pleiotropic drug resistance protein 2 (PDR2) from Nicotiana plumbaginifolia (Leadwort-leaved tobacco).